Here is a 795-residue protein sequence, read N- to C-terminus: Phenylalanine--tRNA ligase beta subunit (795 aa).

The tRNA-binding domain maps to 39–148 (AGRFTGVVVG…AEAPIGQDIR (110 aa)). The B5 domain occupies 401 to 476 (PQPATITLRR…RVYGYDAIPN (76 aa)). 4 residues coordinate Mg(2+): Asp-454, Asp-460, Glu-463, and Glu-464. In terms of domain architecture, FDX-ACB spans 701–794 (SRFPANRRDI…LKQRFQASLR (94 aa)).

It belongs to the phenylalanyl-tRNA synthetase beta subunit family. Type 1 subfamily. In terms of assembly, tetramer of two alpha and two beta subunits. Requires Mg(2+) as cofactor.

Its subcellular location is the cytoplasm. It carries out the reaction tRNA(Phe) + L-phenylalanine + ATP = L-phenylalanyl-tRNA(Phe) + AMP + diphosphate + H(+). This Sodalis glossinidius (strain morsitans) protein is Phenylalanine--tRNA ligase beta subunit.